We begin with the raw amino-acid sequence, 247 residues long: Fibroblast growth factor 14 (247 aa).

Disordered regions lie at residues M1 to R37 and E216 to T247. Over residues Q15 to S25 the composition is skewed to basic and acidic residues.

It belongs to the heparin-binding growth factors family. As to quaternary structure, interacts with SCN8A. As to expression, brain and testis; widely distributed in the developing nervous system. In adult, high levels in the granular layer of the cerebellum, less in hippocampus and olfactory bulb.

It localises to the nucleus. In terms of biological role, probably involved in nervous system development and function. The sequence is that of Fibroblast growth factor 14 (Fgf14) from Mus musculus (Mouse).